The primary structure comprises 349 residues: Cyclic AMP-dependent transcription factor ATF-4 (349 aa).

3 disordered regions span residues 49-75, 204-271, and 279-298; these read FSSDKAGSSEWPAMDDGLASASDTGKE, PPCV…TAKV, and KLKKMEQNKTAATRYRQKKR. P60 carries the 4-hydroxyproline modification. The residue at position 212 (T212) is a Phosphothreonine. A phosphoserine mark is found at S214, S218, S223, S230, and S234. The BetaTrCP degron motif signature appears at 214-223; that stretch reads SDNDSGICMS. Residues 229–239 show a composition bias toward polar residues; it reads GSPQHSPSTSR. P235 is subject to 4-hydroxyproline. Phosphoserine is present on S247. S251 bears the Phosphoserine; by RPS6KA3 mark. Residues K258 and K270 each participate in a glycyl lysine isopeptide (Lys-Gly) (interchain with G-Cter in SUMO2) cross-link. Residues 276–339 form the bZIP domain; sequence LDKKLKKMEQ…QYLKDLIEEV (64 aa). A basic motif region spans residues 278–298; sequence KKLKKMEQNKTAATRYRQKKR. Residues 303 to 339 are interaction with GABBR1; that stretch reads ALTGECKELEKKNEALKEKADSLAKEIQYLKDLIEEV. The segment at 304–332 is leucine-zipper; sequence LTGECKELEKKNEALKEKADSLAKEIQYL. K309 is subject to N6-acetyllysine.

This sequence belongs to the bZIP family. In terms of assembly, binds DNA as a homodimer and as a heterodimer. Heterodimer; heterodimerizes with CEBPB. Heterodimer; heterodimerizes with DDIT3/CHOP. Interacts with CEP290 (via an N-terminal region). Interacts with NEK6, DAPK2 (isoform 2) and ZIPK/DAPK3. Interacts (via its leucine zipper domain) with GABBR1 and GABBR2 (via their C-termini). Forms a heterodimer with TXLNG in osteoblasts. Interacts (via its DNA binding domain) with FOXO1 (C-terminal half); the interaction occurs in osteoblasts and regulates glucose homeostasis through suppression of beta-cell proliferation and a decrease in insulin production. Interacts with SATB2; the interaction results in enhanced DNA binding and transactivation by these transcription factors. Interacts with ABRAXAS2. Interacts with TRIB3, inhibiting the transactivation activity of ATF4. Interacts with DISC1; which inhibits ATF4 transcription factor activity by disrupting ATF4 dimerization and DNA-binding. Interacts with EP300/p300; EP300/p300 stabilizes ATF4 and increases its transcriptional activity independently of its catalytic activity by preventing its ubiquitination. Ubiquitinated by SCF(BTRC) in response to mTORC1 signal, followed by proteasomal degradation and leading to down-regulate expression of SIRT4. Interaction with EP300/p300 inhibits ubiquitination by SCF(BTRC). Post-translationally, phosphorylation at Ser-251 by RPS6KA3/RSK2 in osteoblasts enhances transactivation activity and promotes osteoblast differentiation. Phosphorylated on the betaTrCP degron motif at Ser-218, followed by phosphorylation at Thr-212, Ser-223, Ser-230, Ser-234 and Ser-247, promoting interaction with BTRC and ubiquitination. Phosphorylation is promoted by mTORC1. Phosphorylation at Ser-214 by CK2 decreases its stability. Phosphorylated by NEK6. In terms of processing, hydroxylated by PHD3, leading to decreased protein stability. In terms of tissue distribution, ubiquitously expressed in adults.

It is found in the nucleus. It localises to the nucleus speckle. Its subcellular location is the cytoplasm. The protein resides in the cell membrane. The protein localises to the cytoskeleton. It is found in the microtubule organizing center. It localises to the centrosome. Transcription factor that binds the cAMP response element (CRE) (consensus: 5'-GTGACGT[AC][AG]-3') and displays two biological functions, as regulator of metabolic and redox processes under normal cellular conditions, and as master transcription factor during integrated stress response (ISR). Binds to asymmetric CRE's as a heterodimer and to palindromic CRE's as a homodimer. Core effector of the ISR, which is required for adaptation to various stress such as endoplasmic reticulum (ER) stress, amino acid starvation, mitochondrial stress or oxidative stress. During ISR, ATF4 translation is induced via an alternative ribosome translation re-initiation mechanism in response to EIF2S1/eIF-2-alpha phosphorylation, and stress-induced ATF4 acts as a master transcription factor of stress-responsive genes in order to promote cell recovery. Promotes the transcription of genes linked to amino acid sufficiency and resistance to oxidative stress to protect cells against metabolic consequences of ER oxidation. Activates the transcription of NLRP1, possibly in concert with other factors in response to ER stress. Activates the transcription of asparagine synthetase (ASNS) in response to amino acid deprivation or ER stress. However, when associated with DDIT3/CHOP, the transcriptional activation of the ASNS gene is inhibited in response to amino acid deprivation. Together with DDIT3/CHOP, mediates programmed cell death by promoting the expression of genes involved in cellular amino acid metabolic processes, mRNA translation and the terminal unfolded protein response (terminal UPR), a cellular response that elicits programmed cell death when ER stress is prolonged and unresolved. Activates the expression of COX7A2L/SCAF1 downstream of the EIF2AK3/PERK-mediated unfolded protein response, thereby promoting formation of respiratory chain supercomplexes and increasing mitochondrial oxidative phosphorylation. Together with DDIT3/CHOP, activates the transcription of the IRS-regulator TRIB3 and promotes ER stress-induced neuronal cell death by regulating the expression of BBC3/PUMA in response to ER stress. May cooperate with the UPR transcriptional regulator QRICH1 to regulate ER protein homeostasis which is critical for cell viability in response to ER stress. In the absence of stress, ATF4 translation is at low levels and it is required for normal metabolic processes such as embryonic lens formation, fetal liver hematopoiesis, bone development and synaptic plasticity. Acts as a regulator of osteoblast differentiation in response to phosphorylation by RPS6KA3/RSK2: phosphorylation in osteoblasts enhances transactivation activity and promotes expression of osteoblast-specific genes and post-transcriptionally regulates the synthesis of Type I collagen, the main constituent of the bone matrix. Cooperates with FOXO1 in osteoblasts to regulate glucose homeostasis through suppression of beta-cell production and decrease in insulin production. Activates transcription of SIRT4. Regulates the circadian expression of the core clock component PER2 and the serotonin transporter SLC6A4. Binds in a circadian time-dependent manner to the cAMP response elements (CRE) in the SLC6A4 and PER2 promoters and periodically activates the transcription of these genes. Mainly acts as a transcriptional activator in cellular stress adaptation, but it can also act as a transcriptional repressor: acts as a regulator of synaptic plasticity by repressing transcription, thereby inhibiting induction and maintenance of long-term memory. Regulates synaptic functions via interaction with DISC1 in neurons, which inhibits ATF4 transcription factor activity by disrupting ATF4 dimerization and DNA-binding. The sequence is that of Cyclic AMP-dependent transcription factor ATF-4 from Mus musculus (Mouse).